The chain runs to 793 residues: ClpA homolog protein (793 aa).

The segment at 1–24 (MRPRSNAGSSPPDPEEQEHAQVPS) is disordered. In terms of domain architecture, Clp R spans 22–168 (VPSFSSTLEQ…NFIAHGVAKD (147 aa)). 2 repeat regions span residues 25–88 (FSST…IDDD) and 103–168 (PTAA…VAKD). Residues 169–194 (PSYGESRPVQGADEPQETPKAEAGEA) are disordered. The segment covering 185–194 (ETPKAEAGEA) has biased composition (basic and acidic residues). Positions 199 to 447 (LSKYCVDLNI…AQHLVSDSKR (249 aa)) are i. ATP contacts are provided by residues 244-251 (GDPGVGKT) and 525-532 (GPTGVGKT). Residues 451–639 (LGTKEIEAVV…ILIMTSNVGA (189 aa)) form an II region.

It belongs to the ClpA/ClpB family.

This chain is ClpA homolog protein, found in Fuscovulum blasticum (Rhodobacter blasticus).